A 40-amino-acid chain; its full sequence is uncharacterized protein (40 aa).

This is an uncharacterized protein from Saccharomyces cerevisiae (strain ATCC 204508 / S288c) (Baker's yeast).